Consider the following 772-residue polypeptide: Larval serum protein 1 gamma chain (772 aa).

The first 16 residues, 1–16 (MKLTLVILALVACVTA), serve as a signal peptide directing secretion. Asn242 carries N-linked (GlcNAc...) asparagine glycosylation.

This sequence belongs to the hemocyanin family. In terms of assembly, heterohexamer, composed of three subunits, alpha, beta and gamma. Larval hemolymph.

Its subcellular location is the secreted. It localises to the extracellular space. In terms of biological role, larval storage protein (LSP) which may serve as a store of amino acids for synthesis of adult proteins. In Drosophila melanogaster (Fruit fly), this protein is Larval serum protein 1 gamma chain (Lsp1gamma).